A 219-amino-acid chain; its full sequence is Protein bunched, class 1/class 3/D/E isoforms (219 aa).

The interval 82–103 (LKERISELMDKINKLELENSIL) is leucine-zipper.

The protein belongs to the TSC-22/Dip/Bun family. In terms of tissue distribution, anterior dorsal follicle cells at stages 10-12 of oogenesis.

It is found in the cytoplasm. The protein localises to the nucleus. Probable transcription factor required for peripheral nervous system morphogenesis, eye development and oogenesis. May be required for the transmission of the dpp signal and for a morphogenetic movement of the medulla in the brain that reorients the second optic lobe relative to the first. Plays a role in determining proper dorsal cell fates leading to the formation of the dorsal appendages. This is Protein bunched, class 1/class 3/D/E isoforms (bun) from Drosophila melanogaster (Fruit fly).